The following is a 363-amino-acid chain: Probable aminomethyltransferase (363 aa).

The protein belongs to the GcvT family. In terms of assembly, the glycine cleavage system is composed of four proteins: P, T, L and H.

It carries out the reaction N(6)-[(R)-S(8)-aminomethyldihydrolipoyl]-L-lysyl-[protein] + (6S)-5,6,7,8-tetrahydrofolate = N(6)-[(R)-dihydrolipoyl]-L-lysyl-[protein] + (6R)-5,10-methylene-5,6,7,8-tetrahydrofolate + NH4(+). Functionally, the glycine cleavage system catalyzes the degradation of glycine. The chain is Probable aminomethyltransferase from Halobacterium salinarum (strain ATCC 29341 / DSM 671 / R1).